A 564-amino-acid polypeptide reads, in one-letter code: MLSDLDIAQAARLRPIHAVAADLGLTDDDIERYGRNIAKIDLAVLQRLTDHPRGRYIVVTAITPTPLGEGKTTTTIGLGQALARLGKRSVVTIRQPSMGPTFGIKGGAAGGGYSQVVPMEPFNLHLTGDIHAVGAAHNLLAAMIDNHLHHGNRLDIDPYTVSWTRVVDISDRALRQVIVGLGGKENGPVRQAQFDITVASEVMAILALTTGLHDLRQRLGRIVVAQTRDGAPVTADDLKAAGAMTVLLKEAIKPNLLQTLEGSPALVHCGPFANIAHGASSVLADLIGLHCADYVVTESGFGADIGFEKFCDIKCRASGLAPDAVVLVATVRALKAHSGRYAITAGKPLDPQLSEENPDDVAAGVANLTAQVRIAKLFGRPVVVAINRFPDDFPSEIEVVRQVARDAGAFEVVESFVFAEGGAGGYDLAQAVMAACEMPGKFTPLYPLDMSLRDKIETLATKVYGAARVEYTPEASRQLTRFEQQGYGALPICMAKTQLSISHDPKLRGAPSGYVFPIREVRLAAGAGFIYPLAGDIRTMPGLPAHPAAERIDIDADGRTVGLS.

ATP is bound at residue 65-72; sequence TPLGEGKT.

Belongs to the formate--tetrahydrofolate ligase family.

The catalysed reaction is (6S)-5,6,7,8-tetrahydrofolate + formate + ATP = (6R)-10-formyltetrahydrofolate + ADP + phosphate. It functions in the pathway one-carbon metabolism; tetrahydrofolate interconversion. The sequence is that of Formate--tetrahydrofolate ligase from Roseiflexus sp. (strain RS-1).